Reading from the N-terminus, the 152-residue chain is Ribosomal RNA large subunit methyltransferase H (152 aa).

S-adenosyl-L-methionine-binding positions include L68, G100, and 119-124; that span reads FGRMTW.

This sequence belongs to the RNA methyltransferase RlmH family. In terms of assembly, homodimer.

The protein resides in the cytoplasm. It catalyses the reaction pseudouridine(1915) in 23S rRNA + S-adenosyl-L-methionine = N(3)-methylpseudouridine(1915) in 23S rRNA + S-adenosyl-L-homocysteine + H(+). In terms of biological role, specifically methylates the pseudouridine at position 1915 (m3Psi1915) in 23S rRNA. This is Ribosomal RNA large subunit methyltransferase H from Paramagnetospirillum magneticum (strain ATCC 700264 / AMB-1) (Magnetospirillum magneticum).